A 305-amino-acid polypeptide reads, in one-letter code: Oxygen-dependent coproporphyrinogen-III oxidase (305 aa).

Residue Ser98 participates in substrate binding. His102 and His112 together coordinate a divalent metal cation. The active-site Proton donor is His112. 114–116 provides a ligand contact to substrate; it reads NVR. His151 and His181 together coordinate a divalent metal cation. An important for dimerization region spans residues 246-281; sequence YVEFNLVYDRGTLFGLQSGGRTESILMSMPPLARWE. 264-266 provides a ligand contact to substrate; the sequence is GGR.

It belongs to the aerobic coproporphyrinogen-III oxidase family. As to quaternary structure, homodimer. It depends on a divalent metal cation as a cofactor.

The protein localises to the cytoplasm. The catalysed reaction is coproporphyrinogen III + O2 + 2 H(+) = protoporphyrinogen IX + 2 CO2 + 2 H2O. It functions in the pathway porphyrin-containing compound metabolism; protoporphyrin-IX biosynthesis; protoporphyrinogen-IX from coproporphyrinogen-III (O2 route): step 1/1. In terms of biological role, involved in the heme biosynthesis. Catalyzes the aerobic oxidative decarboxylation of propionate groups of rings A and B of coproporphyrinogen-III to yield the vinyl groups in protoporphyrinogen-IX. In Vibrio campbellii (strain ATCC BAA-1116), this protein is Oxygen-dependent coproporphyrinogen-III oxidase.